Here is an 865-residue protein sequence, read N- to C-terminus: Protein translocase subunit SecA (865 aa).

ATP-binding positions include Gln-85, 103–107 (GEGKT), and Asp-505. Residues Cys-847, Cys-849, Cys-858, and His-859 each contribute to the Zn(2+) site.

It belongs to the SecA family. Monomer and homodimer. Part of the essential Sec protein translocation apparatus which comprises SecA, SecYEG and auxiliary proteins SecDF. Other proteins may also be involved. The cofactor is Zn(2+).

Its subcellular location is the cell membrane. The protein resides in the cytoplasm. The catalysed reaction is ATP + H2O + cellular proteinSide 1 = ADP + phosphate + cellular proteinSide 2.. Part of the Sec protein translocase complex. Interacts with the SecYEG preprotein conducting channel. Has a central role in coupling the hydrolysis of ATP to the transfer of proteins into and across the cell membrane, serving as an ATP-driven molecular motor driving the stepwise translocation of polypeptide chains across the membrane. This chain is Protein translocase subunit SecA, found in Lactococcus lactis subsp. cremoris (strain MG1363).